Consider the following 155-residue polypeptide: Perlucin (155 aa).

Disulfide bonds link Cys-2-Cys-13, Cys-30-Cys-127, and Cys-102-Cys-119. The C-type lectin domain occupies 9-128; it reads NRRSCYWFST…CQKPSHFICE (120 aa). An N-linked (GlcNAc...) asparagine glycan is attached at Asn-84. A run of 2 repeats spans residues 136-145 and 146-155.

In terms of processing, glycosylated.

May promote nucleation and/or growth of calcium carbonate crystals. Binds to D-galactose and D-mannose/D-glucose. This is Perlucin from Haliotis laevigata (Smooth Australian abalone).